Consider the following 233-residue polypeptide: Coenzyme Q-binding protein COQ10 homolog, mitochondrial (233 aa).

The transit peptide at 1 to 34 (MAEKATSLFLRAMEISEKQSFDVMRRNSSCTIRH) directs the protein to the mitochondrion.

It belongs to the COQ10 family. Interacts with coenzyme Q.

The protein localises to the mitochondrion inner membrane. Functionally, required for the function of coenzyme Q in the respiratory chain. May serve as a chaperone or may be involved in the transport of Q6 from its site of synthesis to the catalytic sites of the respiratory complexes. The sequence is that of Coenzyme Q-binding protein COQ10 homolog, mitochondrial from Danio rerio (Zebrafish).